The following is a 392-amino-acid chain: Succinate--CoA ligase [ADP-forming] subunit beta (392 aa).

One can recognise an ATP-grasp domain in the interval 9–244 (KALLAQYGVG…LSEEESSEIE (236 aa)). ATP is bound by residues lysine 46, 53–55 (GRG), glutamate 99, leucine 102, and glutamate 107. Asparagine 199 and aspartate 213 together coordinate Mg(2+). Substrate is bound by residues asparagine 264 and 321 to 323 (GIV).

It belongs to the succinate/malate CoA ligase beta subunit family. Heterotetramer of two alpha and two beta subunits. Mg(2+) serves as cofactor.

The enzyme catalyses succinate + ATP + CoA = succinyl-CoA + ADP + phosphate. It carries out the reaction GTP + succinate + CoA = succinyl-CoA + GDP + phosphate. It functions in the pathway carbohydrate metabolism; tricarboxylic acid cycle; succinate from succinyl-CoA (ligase route): step 1/1. In terms of biological role, succinyl-CoA synthetase functions in the citric acid cycle (TCA), coupling the hydrolysis of succinyl-CoA to the synthesis of either ATP or GTP and thus represents the only step of substrate-level phosphorylation in the TCA. The beta subunit provides nucleotide specificity of the enzyme and binds the substrate succinate, while the binding sites for coenzyme A and phosphate are found in the alpha subunit. This Wolinella succinogenes (strain ATCC 29543 / DSM 1740 / CCUG 13145 / JCM 31913 / LMG 7466 / NCTC 11488 / FDC 602W) (Vibrio succinogenes) protein is Succinate--CoA ligase [ADP-forming] subunit beta.